The following is a 357-amino-acid chain: MGNSSCCLRTRSSSGEDKSYNNDGQYIRTNQVEFQYVNQVFPRDETSTNFLPHISEREVTEGYEEDPSTNPTARPTFMERSKSEMKLKDNRRSCYMLDALAAGGHHPGILPRSLRKSSSCSTIYIDDSTVSQPHLKNTIKCISLAIYYHISNRKNRGHERLMEIFEERLHPIFRDPIPPEQMTRDPDHRNIYRFVRNLFSSAQLTAECAIITLVYIERLLNYAEMDLCPSNWRRVVLGSIMLASKVWDDQAVWNVDYCQILRDTNVDDMNELERRFLECLDFNIEVPSSVYAKYYFDLRTLALANDLQLPIQPLYKERAQRLEALSRVFEDKIQSSSLPKRARSAEHLVFEHPAVLS.

Over residues 1–13 the composition is skewed to polar residues; it reads MGNSSCCLRTRSS. Positions 1–23 are disordered; sequence MGNSSCCLRTRSSSGEDKSYNND. One can recognise a Cyclin N-terminal domain in the interval 186-284; that stretch reads PDHRNIYRFV…RFLECLDFNI (99 aa).

It belongs to the cyclin family. In terms of assembly, interacts with pct-1; the interaction is required to activate pct-1.

The protein localises to the cytoplasm. Its subcellular location is the cell projection. It localises to the dendrite. The protein resides in the axon. In terms of biological role, in association with pct-1, regulates the trafficking of synaptic vesicle precursors in DA motor neurons by promoting anterograde trafficking to the axon and preventing dynein-dependent trafficking to the dendrite. May also regulate synaptic vesicle trafficking in DD motor neurons and in RIA interneurons. Involved in synapse formation during DD motor neuron remodeling by disassembling ventral presynaptic structures. May activate cdk-5. This chain is Cyclin-Y, found in Caenorhabditis elegans.